The primary structure comprises 312 residues: Malate dehydrogenase (312 aa).

NAD(+) is bound by residues 7 to 13 and D34; that span reads GAAGGIG. Substrate-binding residues include R81 and R87. Residues N94 and 117 to 119 contribute to the NAD(+) site; that span reads ITN. Substrate contacts are provided by N119 and R153. H177 acts as the Proton acceptor in catalysis. M227 provides a ligand contact to NAD(+).

The protein belongs to the LDH/MDH superfamily. MDH type 1 family. Homodimer.

It catalyses the reaction (S)-malate + NAD(+) = oxaloacetate + NADH + H(+). Functionally, catalyzes the reversible oxidation of malate to oxaloacetate. In Yersinia pseudotuberculosis serotype O:1b (strain IP 31758), this protein is Malate dehydrogenase.